Consider the following 515-residue polypeptide: Maturase K (515 aa).

This sequence belongs to the intron maturase 2 family. MatK subfamily.

Its subcellular location is the plastid. The protein localises to the chloroplast. Functionally, usually encoded in the trnK tRNA gene intron. Probably assists in splicing its own and other chloroplast group II introns. This Pinus uncinata (Mountain pine) protein is Maturase K.